An 84-amino-acid chain; its full sequence is MALSVLRLALLLLAVTFAASLIPQFGLFSKYRTPNCSQYRLPGCPRHFNPVCGSDMSTYANECTLCMKIREGGHNIKIIRNGPC.

A signal peptide spans M1–P23. Pyrrolidone carboxylic acid is present on Q24. Residues K30 to C84 form the Kazal-like domain. 3 disulfides stabilise this stretch: C36–C66, C44–C63, and C52–C84.

Expressed in epididymis (at protein level).

Its subcellular location is the secreted. The protein resides in the cytoplasmic vesicle. It localises to the secretory vesicle. The protein localises to the acrosome. Its function is as follows. As a strong inhibitor of acrosin, it is required for normal spermiogenesis. It probably hinders premature activation of proacrosin and other proteases, thus preventing the cascade of events leading to spermiogenesis defects. May be involved in the regulation of serine protease-dependent germ cell apoptosis. It also inhibits trypsin. The polypeptide is Serine protease inhibitor Kazal-type 2 (SPINK2) (Homo sapiens (Human)).